A 439-amino-acid chain; its full sequence is Sorting nexin-31 (439 aa).

The region spanning 1–109 (MKMHFCIPVS…EFLTLVQLHT (109 aa)) is the PX domain. A disordered region spans residues 384 to 409 (TEQSPEMQIEVPEQGRSKKHPSQPSQ).

The protein belongs to the sorting nexin family. Interacts with CCDC22, CCDC93, VPS26C and VPS35L, associates with the retriever and CCC complexes.

Functionally, may be involved in protein trafficking. This Mus musculus (Mouse) protein is Sorting nexin-31 (Snx31).